Here is a 211-residue protein sequence, read N- to C-terminus: MGYDLYVVTDETIGRGRTHTDLARLAAAGGADVIQLRDKRLPGRDLLSAAVAIREITTDAGALFIVNDRLDVAIAAGADGVHLGANDLPVGEARRIVPPGFLIGASVGSVAAAVRAAAEGADYVALSPTFATGSKDDAGPGCGLAALKEIRAAVSLPLVAIGGITAANVADVIAAGADGVAVISAVVGEGDVTAAARSLRDRIAAAKAEGR.

4-amino-2-methyl-5-(diphosphooxymethyl)pyrimidine contacts are provided by residues 35-39 and Asn67; that span reads QLRDK. Mg(2+) is bound by residues Asp68 and Asp87. Ser106 lines the 4-amino-2-methyl-5-(diphosphooxymethyl)pyrimidine pocket. 132-134 is a 2-[(2R,5Z)-2-carboxy-4-methylthiazol-5(2H)-ylidene]ethyl phosphate binding site; that stretch reads TGS. Lys135 is a binding site for 4-amino-2-methyl-5-(diphosphooxymethyl)pyrimidine. 2-[(2R,5Z)-2-carboxy-4-methylthiazol-5(2H)-ylidene]ethyl phosphate is bound by residues Gly163 and 183-184; that span reads IS.

This sequence belongs to the thiamine-phosphate synthase family. It depends on Mg(2+) as a cofactor.

The enzyme catalyses 2-[(2R,5Z)-2-carboxy-4-methylthiazol-5(2H)-ylidene]ethyl phosphate + 4-amino-2-methyl-5-(diphosphooxymethyl)pyrimidine + 2 H(+) = thiamine phosphate + CO2 + diphosphate. It catalyses the reaction 2-(2-carboxy-4-methylthiazol-5-yl)ethyl phosphate + 4-amino-2-methyl-5-(diphosphooxymethyl)pyrimidine + 2 H(+) = thiamine phosphate + CO2 + diphosphate. It carries out the reaction 4-methyl-5-(2-phosphooxyethyl)-thiazole + 4-amino-2-methyl-5-(diphosphooxymethyl)pyrimidine + H(+) = thiamine phosphate + diphosphate. The protein operates within cofactor biosynthesis; thiamine diphosphate biosynthesis; thiamine phosphate from 4-amino-2-methyl-5-diphosphomethylpyrimidine and 4-methyl-5-(2-phosphoethyl)-thiazole: step 1/1. In terms of biological role, condenses 4-methyl-5-(beta-hydroxyethyl)thiazole monophosphate (THZ-P) and 2-methyl-4-amino-5-hydroxymethyl pyrimidine pyrophosphate (HMP-PP) to form thiamine monophosphate (TMP). The chain is Thiamine-phosphate synthase from Methanoculleus marisnigri (strain ATCC 35101 / DSM 1498 / JR1).